Here is a 1224-residue protein sequence, read N- to C-terminus: MLTKFETKSARVKGLSFHPKRPWILTSLHNGVIQLWDYRMCTLIDKFDEHDGPVRGIDFHKQQPLFVSGGDDYKIKVWNYKLRRCLFTLLGHLDYIRTTFFHHEYPWILSASDDQTIRVWNWQSRTCVCVLTGHNHYVMCAQFHPSEDLVVSASLDQTVRVWDISGLRKKNLSPGAVESDVRGITGVDLFGTTDAVVKHVLEGHDRGVNWAAFHPTMPLIVSGADDRQVKIWRMNESKAWEVDTCRGHYNNVSCAVFHPRQELILSNSEDKSIRVWDMSKRTGVQTFRRDHDRFWVLAAHPNLNLFAAGHDGGMIVFKLERERPAYAVHGNMLHYVKDRFLRQLDFNSSKDVAVMQLRSGSKFPVFSMSYNPAENAVLLCTRASNLENSTYDLYTIPKDADTQNPDAPEGKRSSGLTAVWVARNRFAVLDRMHSLLIKNLKNEITKKVQVPNCDEIFYAGTGNLLLRDAESITLFDVQQKRTLASVKISKVKYVIWSADMSHVALLAKHAIVICNRKLEALCNIHENIRVKSGAWDESGVFIYTTSNHIKYAVTTGDYGIIRTLDLPIYVTRVKGNNVYCLDRECRPRVLTIDPTEFKFKLALINRKYDEVLHMVRNAKLVGQSIIAYLQKKGYPEVALHFVKDEKTRFSLALECGNIEIALEAAKALDDKNCWEKLGEVALLQGNHQIVEMCYQRTKNFDKLSFLYLITGNLEKLRKMMKIAEIRKDMSGHYQNALYLGDVSERVRILKNCGQKSLAYLTAATHGLDEEAESLKETFDPEKETIPDIDPNAKLLQPPAPIMPLDTNWPLLTVSKGFFEGSIASKGKGGALAADIDIDTVGTEGWGEDAELQLDEDGFVEATEGLGDDALGKGQEEGGGWDVEEDLELPPELDIPPGAAGGAEDGFFVPPTKGTSPTQIWCNNSQLPVDHILAGSFETAMRLLHDQVGVTQFGPYKQLFLQTYARGRTTYQALPCLPSMYGYPNRNWKDAGLKNGVPAVGLKLNDLIQRLQLCYQLTTVGKFEEAVEKFRSILLSVPLLVVDNKQEIAEAQQLITICREYIVGLSMETERKKLPKETLEQQKRICEMAAYFTHSNLQPVHMILVLRTALNLFFKLKNFRTAAAFARRLLELGPKPEVAQQTRKILSACEKNPTDAYQLNYDMHNPFDICAASYRPIYRGKPVEKCPLSGACYSPEFKGQICKVTTVTEIGKDVIGLRISPLQFR.

4 WD repeats span residues 7–37 (TKSA…QLWD), 49–79 (EHDG…KVWN), 91–121 (GHLD…RVWN), and 133–163 (GHNH…RVWD). Residue Ser-173 is modified to Phosphoserine. The residue at position 185 (Thr-185) is a Phosphothreonine. 2 WD repeats span residues 203–233 (GHDR…KIWR) and 247–277 (GHYN…RVWD). Thr-591 bears the Phosphothreonine mark. Residue Arg-965 is modified to Omega-N-methylarginine. At Ser-1193 the chain carries Phosphoserine.

Oligomeric complex that consists of at least the alpha, beta, beta', gamma, delta, epsilon and zeta subunits. Interacts with SCYL1. Interacts with JAGN1. Interacts with TMEM41B. Interacts with SVEP1. Probably interacts with PEX11A.

It localises to the cytoplasm. It is found in the golgi apparatus membrane. Its subcellular location is the cytoplasmic vesicle. The protein resides in the COPI-coated vesicle membrane. The protein localises to the secreted. Functionally, the coatomer is a cytosolic protein complex that binds to dilysine motifs and reversibly associates with Golgi non-clathrin-coated vesicles, which further mediate biosynthetic protein transport from the ER, via the Golgi up to the trans Golgi network. Coatomer complex is required for budding from Golgi membranes, and is essential for the retrograde Golgi-to-ER transport of dilysine-tagged proteins. In mammals, the coatomer can only be recruited by membranes associated to ADP-ribosylation factors (ARFs), which are small GTP-binding proteins; the complex also influences the Golgi structural integrity, as well as the processing, activity, and endocytic recycling of LDL receptors. Its function is as follows. Xenin stimulates exocrine pancreatic secretion. It inhibits pentagastrin-stimulated secretion of acid, to induce exocrine pancreatic secretion and to affect small and large intestinal motility. In the gut, xenin interacts with the neurotensin receptor. The chain is Coatomer subunit alpha (COPA) from Bos taurus (Bovine).